A 288-amino-acid chain; its full sequence is ATP synthase gamma chain (288 aa).

It belongs to the ATPase gamma chain family. F-type ATPases have 2 components, CF(1) - the catalytic core - and CF(0) - the membrane proton channel. CF(1) has five subunits: alpha(3), beta(3), gamma(1), delta(1), epsilon(1). CF(0) has three main subunits: a, b and c.

The protein resides in the cell inner membrane. Its function is as follows. Produces ATP from ADP in the presence of a proton gradient across the membrane. The gamma chain is believed to be important in regulating ATPase activity and the flow of protons through the CF(0) complex. The polypeptide is ATP synthase gamma chain (Rickettsia canadensis (strain McKiel)).